Here is a 613-residue protein sequence, read N- to C-terminus: UvrABC system protein C (613 aa).

The GIY-YIG domain occupies 12-89 (DHPGVYIMHD…IKQHRPRYNV (78 aa)). In terms of domain architecture, UVR spans 199 to 234 (TALVKELKEQMEAAAARLEFEKAARLRDQLRAVQEV).

Belongs to the UvrC family. As to quaternary structure, interacts with UvrB in an incision complex.

It localises to the cytoplasm. Functionally, the UvrABC repair system catalyzes the recognition and processing of DNA lesions. UvrC both incises the 5' and 3' sides of the lesion. The N-terminal half is responsible for the 3' incision and the C-terminal half is responsible for the 5' incision. The sequence is that of UvrABC system protein C from Moorella thermoacetica (strain ATCC 39073 / JCM 9320).